The sequence spans 404 residues: Serine/threonine transporter SstT (404 aa).

The next 9 membrane-spanning stretches (helical) occupy residues 11 to 31 (IINA…IILA), 44 to 64 (LGGL…FVLV), 82 to 102 (IISL…TMSF), 144 to 164 (TANY…LHHA), 179 to 199 (VSFI…GLVA), 218 to 238 (GVLL…MVFI), 290 to 310 (IPLG…VLTL), 316 to 336 (MGIQ…AISA), and 363 to 383 (VAMQ…SAET).

Belongs to the dicarboxylate/amino acid:cation symporter (DAACS) (TC 2.A.23) family.

It is found in the cell inner membrane. The enzyme catalyses L-serine(in) + Na(+)(in) = L-serine(out) + Na(+)(out). It carries out the reaction L-threonine(in) + Na(+)(in) = L-threonine(out) + Na(+)(out). In terms of biological role, involved in the import of serine and threonine into the cell, with the concomitant import of sodium (symport system). This Desulfotalea psychrophila (strain LSv54 / DSM 12343) protein is Serine/threonine transporter SstT.